Consider the following 227-residue polypeptide: uncharacterized protein (227 aa).

Helical transmembrane passes span 109–128, 173–192, and 199–221; these read MCNV…FAGI, AILL…ILLT, and ALRV…VMMG.

The protein resides in the cell membrane. This is an uncharacterized protein from Archaeoglobus fulgidus (strain ATCC 49558 / DSM 4304 / JCM 9628 / NBRC 100126 / VC-16).